The sequence spans 329 residues: Peroxidase 58 (329 aa).

An N-terminal signal peptide occupies residues 1 to 23; it reads MGLSKTIPLVLLPILMFGVLSNA. Intrachain disulfides connect Cys34–Cys116, Cys67–Cys72, Cys122–Cys325, and Cys201–Cys234. Residue Asn36 is glycosylated (N-linked (GlcNAc...) asparagine). His65 functions as the Proton acceptor in the catalytic mechanism. Positions 66, 69, 71, 73, and 75 each coordinate Ca(2+). Pro164 provides a ligand contact to substrate. Position 194 (His194) interacts with heme b. Residue Thr195 coordinates Ca(2+). A glycan (N-linked (GlcNAc...) asparagine) is linked at Asn210. Residues Asp247, Ser250, and Asp255 each contribute to the Ca(2+) site.

Belongs to the peroxidase family. Classical plant (class III) peroxidase subfamily. Requires heme b as cofactor. The cofactor is Ca(2+).

The protein resides in the secreted. It carries out the reaction 2 a phenolic donor + H2O2 = 2 a phenolic radical donor + 2 H2O. Its function is as follows. Removal of H(2)O(2), oxidation of toxic reductants, biosynthesis and degradation of lignin, suberization, auxin catabolism, response to environmental stresses such as wounding, pathogen attack and oxidative stress. These functions might be dependent on each isozyme/isoform in each plant tissue. The polypeptide is Peroxidase 58 (PER58) (Arabidopsis thaliana (Mouse-ear cress)).